We begin with the raw amino-acid sequence, 139 residues long: uncharacterized protein (139 aa).

Residues 8 to 139 (ANLLDHALTK…FLAIIAKLAQ (132 aa)) form the HTH marR-type domain. Residues 53 to 76 (IKDILKEVTLSPSATTTALNHLEQ) constitute a DNA-binding region (H-T-H motif).

This is an uncharacterized protein from Bacillus subtilis (strain 168).